Here is a 260-residue protein sequence, read N- to C-terminus: Thiazole synthase (260 aa).

Residue Lys96 is the Schiff-base intermediate with DXP of the active site. Residues Gly157, 184–185 (AG), and 206–207 (NT) contribute to the 1-deoxy-D-xylulose 5-phosphate site.

This sequence belongs to the ThiG family. In terms of assembly, homotetramer. Forms heterodimers with either ThiH or ThiS.

It localises to the cytoplasm. The enzyme catalyses [ThiS sulfur-carrier protein]-C-terminal-Gly-aminoethanethioate + 2-iminoacetate + 1-deoxy-D-xylulose 5-phosphate = [ThiS sulfur-carrier protein]-C-terminal Gly-Gly + 2-[(2R,5Z)-2-carboxy-4-methylthiazol-5(2H)-ylidene]ethyl phosphate + 2 H2O + H(+). The protein operates within cofactor biosynthesis; thiamine diphosphate biosynthesis. Functionally, catalyzes the rearrangement of 1-deoxy-D-xylulose 5-phosphate (DXP) to produce the thiazole phosphate moiety of thiamine. Sulfur is provided by the thiocarboxylate moiety of the carrier protein ThiS. In vitro, sulfur can be provided by H(2)S. The chain is Thiazole synthase from Bradyrhizobium sp. (strain ORS 278).